Here is a 266-residue protein sequence, read N- to C-terminus: Glucosamine-6-phosphate deaminase (266 aa).

Catalysis depends on aspartate 72, which acts as the Proton acceptor; for enolization step. Residue aspartate 141 is the For ring-opening step of the active site. Catalysis depends on histidine 143, which acts as the Proton acceptor; for ring-opening step. Glutamate 148 acts as the For ring-opening step in catalysis.

The protein belongs to the glucosamine/galactosamine-6-phosphate isomerase family. NagB subfamily. As to quaternary structure, homohexamer; trimer of disulfide-linked dimers.

The catalysed reaction is alpha-D-glucosamine 6-phosphate + H2O = beta-D-fructose 6-phosphate + NH4(+). It participates in amino-sugar metabolism; N-acetylneuraminate degradation; D-fructose 6-phosphate from N-acetylneuraminate: step 5/5. With respect to regulation, allosterically activated by N-acetylglucosamine 6-phosphate (GlcNAc6P). Catalyzes the reversible isomerization-deamination of glucosamine 6-phosphate (GlcN6P) to form fructose 6-phosphate (Fru6P) and ammonium ion. This Shigella boydii serotype 18 (strain CDC 3083-94 / BS512) protein is Glucosamine-6-phosphate deaminase.